The following is an 841-amino-acid chain: Toll-like receptor 4 (841 aa).

The N-terminal stretch at M1–T23 is a signal peptide. Topologically, residues E24–K632 are extracellular. Residues C29 and C40 are joined by a disulfide bond. N-linked (GlcNAc...) asparagine glycosylation is found at N35 and N73. LRR repeat units follow at residues S55–S76, E79–G100, H103–G124, S127–H148, T151–S172, N176–V197, and N205–E225. N-linked (GlcNAc...) asparagine glycosylation is found at N205, N238, N282, and N309. A disulfide bridge links C281 with C306. LRR repeat units lie at residues S352 to P373, S374 to D395, N400 to E422, K423 to L444, N448 to G469, S472 to L495, N497 to S518, S521 to P542, and L545 to P568. Cysteines 390 and 391 form a disulfide. N497 and N526 each carry an N-linked (GlcNAc...) asparagine glycan. Residues N570 and N575 are each glycosylated (N-linked (GlcNAc...) asparagine). The 52-residue stretch at N579–M630 folds into the LRRCT domain. 2 disulfides stabilise this stretch: C583/C609 and C585/C628. The N-linked (GlcNAc...) asparagine glycan is linked to N625. The helical transmembrane segment at M633–Y653 threads the bilayer. The Cytoplasmic segment spans residues K654–T841. Residues S673–L816 form the TIR domain. Residues K820–T841 are disordered. Positions A830–T841 are enriched in polar residues.

It belongs to the Toll-like receptor family. As to quaternary structure, belongs to the lipopolysaccharide (LPS) receptor, a multi-protein complex containing at least CD14, LY96 and TLR4. Binding to bacterial LPS leads to homodimerization. Interacts with LY96 via the extracellular domain. Interacts with MYD88 and TIRAP via their respective TIR domains. Interacts with TICAM2. Interacts with NOX4. Interacts with CNPY3 and HSP90B1; this interaction is required for proper folding in the endoplasmic reticulum. Interacts with MAP3K21; this interaction leads to negative regulation of TLR4 signaling. Interacts with CD36, following CD36 stimulation by oxLDL or amyloid-beta 42, and forms a heterodimer with TLR6. The trimeric complex is internalized and triggers inflammatory response. LYN kinase activity facilitates TLR4-TLR6 heterodimerization and signal initiation. Interacts with TICAM1 in response to LPS in a WDFY1-dependent manner. Interacts with WDFY1 in response to LPS. Interacts with SMPDL3B. Interacts with CEACAM1; upon lipopolysaccharide stimulation, forms a complex including TLR4 and the phosphorylated form of SYK and CEACAM1, which in turn, recruits PTPN6 that dephosphorylates SYK, reducing the production of reactive oxygen species (ROS) and lysosome disruption, which in turn, reduces the activity of the inflammasome. Interacts with RFTN1; the interaction occurs in response to lipopolysaccharide stimulation. Interacts with SCIMP; the interaction occurs in response to lipopolysaccharide stimulation and is enhanced by phosphorylation of SCIMP by LYN. This interaction facilitates the phosphorylation of TLR4 by LYN which elicits a selective cytokine response in macrophages. Interacts with TRAF3IP3. Interacts with TREM1; this interaction enhances TLR4-mediated inflammatory response. Interacts with ZG16B/PAUF. Interacts with CD82; this interaction inhibits TLR4-mediated signaling pathway. In terms of processing, phosphorylated on tyrosine residues by LYN after binding lipopolysaccharide. Post-translationally, ubiquitinated by RNF128 via 'Lys-28'-linked polyubiquitin chains, leading to proteasomal degradation.

The protein localises to the cell membrane. The protein resides in the early endosome. Its subcellular location is the cell projection. It localises to the ruffle. Transmembrane receptor that functions as a pattern recognition receptor recognizing pathogen- and damage-associated molecular patterns (PAMPs and DAMPs) to induce innate immune responses via downstream signaling pathways. At the plasma membrane, cooperates with LY96 to mediate the innate immune response to bacterial lipopolysaccharide (LPS). Also involved in LPS-independent inflammatory responses triggered by free fatty acids, such as palmitate, and Ni(2+). Mechanistically, acts via MYD88, TIRAP and TRAF6, leading to NF-kappa-B activation, cytokine secretion and the inflammatory response. Alternatively, CD14-mediated TLR4 internalization via endocytosis is associated with the initiation of a MYD88-independent signaling via the TICAM1-TBK1-IRF3 axis leading to type I interferon production. In addition to the secretion of proinflammatory cytokines, initiates the activation of NLRP3 inflammasome and formation of a positive feedback loop between autophagy and NF-kappa-B signaling cascade. In complex with TLR6, promotes inflammation in monocytes/macrophages by associating with TLR6 and the receptor CD86. Upon ligand binding, such as oxLDL or amyloid-beta 42, the TLR4:TLR6 complex is internalized and triggers inflammatory response, leading to NF-kappa-B-dependent production of CXCL1, CXCL2 and CCL9 cytokines, via MYD88 signaling pathway, and CCL5 cytokine, via TICAM1 signaling pathway. In myeloid dendritic cells, vesicular stomatitis virus glycoprotein G but not LPS promotes the activation of IRF7, leading to type I IFN production in a CD14-dependent manner. This is Toll-like receptor 4 (TLR4) from Boselaphus tragocamelus (Nilgai).